A 247-amino-acid polypeptide reads, in one-letter code: MKEMMMSNMFNDVPTPWAMFFQDSATPNMEGMLELHNNVVFYLCMMLGFVTFMLYNMLTTYNKSVMPYKYLNQGQFMEMMWTTLPAVMLLMIAFPSFILLYMCDEVMAPAMTIKAMGLQWYWKYEYSDFMDEKGDTMEFESYMIPEDLLDEGQLRQLDVDAPIVCPVDTHIRFMVTAADVMHDFSVPSLGLKIDAVPGRLNQMSALMQREGVYYGQCSELCGVMHSSMPMKVEAVPTADFLAWIDEQ.

Over 1–38 the chain is Mitochondrial intermembrane; that stretch reads MKEMMMSNMFNDVPTPWAMFFQDSATPNMEGMLELHNN. The helical transmembrane segment at 39 to 58 threads the bilayer; that stretch reads VVFYLCMMLGFVTFMLYNML. Residues 59 to 78 lie on the Mitochondrial matrix side of the membrane; sequence TTYNKSVMPYKYLNQGQFME. The chain crosses the membrane as a helical span at residues 79–103; sequence MMWTTLPAVMLLMIAFPSFILLYMC. Over 104 to 247 the chain is Mitochondrial intermembrane; it reads DEVMAPAMTI…ADFLAWIDEQ (144 aa). The Cu cation site is built by H182, C217, E219, C221, H225, and M228. E219 contacts Mg(2+).

It belongs to the cytochrome c oxidase subunit 2 family. As to quaternary structure, component of the cytochrome c oxidase (complex IV, CIV), a multisubunit enzyme composed of a catalytic core of 3 subunits and several supernumerary subunits. The complex exists as a monomer or a dimer and forms supercomplexes (SCs) in the inner mitochondrial membrane with ubiquinol-cytochrome c oxidoreductase (cytochrome b-c1 complex, complex III, CIII). The cofactor is Cu cation.

The protein resides in the mitochondrion inner membrane. The catalysed reaction is 4 Fe(II)-[cytochrome c] + O2 + 8 H(+)(in) = 4 Fe(III)-[cytochrome c] + 2 H2O + 4 H(+)(out). Component of the cytochrome c oxidase, the last enzyme in the mitochondrial electron transport chain which drives oxidative phosphorylation. The respiratory chain contains 3 multisubunit complexes succinate dehydrogenase (complex II, CII), ubiquinol-cytochrome c oxidoreductase (cytochrome b-c1 complex, complex III, CIII) and cytochrome c oxidase (complex IV, CIV), that cooperate to transfer electrons derived from NADH and succinate to molecular oxygen, creating an electrochemical gradient over the inner membrane that drives transmembrane transport and the ATP synthase. Cytochrome c oxidase is the component of the respiratory chain that catalyzes the reduction of oxygen to water. Electrons originating from reduced cytochrome c in the intermembrane space (IMS) are transferred via the dinuclear copper A center (CU(A)) of subunit 2 and heme A of subunit 1 to the active site in subunit 1, a binuclear center (BNC) formed by heme A3 and copper B (CU(B)). The BNC reduces molecular oxygen to 2 water molecules using 4 electrons from cytochrome c in the IMS and 4 protons from the mitochondrial matrix. This is Cytochrome c oxidase subunit 2 (COX2) from Brettanomyces custersianus (Yeast).